We begin with the raw amino-acid sequence, 116 residues long: Ly-6/neurotoxin-like protein 1 (116 aa).

The signal sequence occupies residues 1-20 (MTHLLTVFLVALMGLPVAQA). The 84-residue stretch at 21 to 104 (LECHVCAYNG…GFATPVTLAL (84 aa)) folds into the UPAR/Ly6 domain. 5 disulfides stabilise this stretch: Cys23–Cys46, Cys26–Cys33, Cys39–Cys64, Cys68–Cys85, and Cys86–Cys91. Residue Asn92 is the site of GPI-anchor amidated asparagine attachment. A propeptide spans 93 to 116 (GAGFATPVTLALVPALLATFWSLL) (removed in mature form).

Interacts with nAChRs containing alpha-4:beta-2 (CHRNA4:CHRNB2) and alpha-7 (CHRNA7) subunits. Interacts with CHRNA4 probably in the endoplasmic reticulum prior to nAChR pentameric assembly. Interacts with KCNA2/Potassium voltage-gated channel subfamily A member 2. As to expression, expressed in neurons of multiple regions in the CNS, including the cerebral cortex, thalamus, substantia nigra, cerebellum, amygdala and hippocampus. Also expressed in kidney, heart and thymus, but at lower levels than in the brain. Expressed in the primary visual cortex (V1) and the lateral geniculate nucleus (at protein level).

Its subcellular location is the cell membrane. The protein localises to the cell projection. It is found in the dendrite. It localises to the endoplasmic reticulum. Functionally, acts in different tissues through interaction to nicotinic acetylcholine receptors (nAChRs). The proposed role as modulator of nAChR activity seems to be dependent on the nAChR subtype and stoichiometry, and to involve an effect on nAChR trafficking and its cell surface expression, and on single channel properties of the nAChR inserted in the plasma membrane. Modulates functional properties of nicotinic acetylcholine receptors (nAChRs) to prevent excessive excitation, and hence neurodegeneration. Enhances desensitization by increasing both the rate and extent of desensitization of alpha-4:beta-2-containing nAChRs and slowing recovery from desensitization. Promotes large amplitude ACh-evoked currents through alpha-4:beta-2 nAChRs. Is involved in regulation of the nAChR pentameric assembly in the endoplasmic reticulum. Shifts stoichiometry from high sensitivity alpha-4(2):beta-2(3) to low sensitivity alpha-4(3):beta-2(2) nAChR. In vitro modulates alpha-3:beta-4-containing nAChRs. Reduces cell surface expression of (alpha-3:beta-4)(2):beta-4 and (alpha-3:beta-4)(2):alpha-5 nAChRs suggesting an interaction with nAChR alpha-3(-):(+)beta-4 subunit interfaces and an allosteric mode. Corresponding single channel effects characterized by decreased unitary conductance, altered burst proportions and enhanced desensitization/inactivation seem to depend on nAChR alpha:alpha subunit interfaces and are greater in (alpha-3:beta-2)(2):alpha-3 when compared to (alpha-3:beta-2)(2):alpha-5 nAChRs. Prevents plasticity in the primary visual cortex late in life. The sequence is that of Ly-6/neurotoxin-like protein 1 from Mus musculus (Mouse).